We begin with the raw amino-acid sequence, 360 residues long: Phosphoserine aminotransferase (360 aa).

Arg41 lines the L-glutamate pocket. Residues Trp101, Thr152, Asp172, and Gln195 each contribute to the pyridoxal 5'-phosphate site. Residue Lys196 is modified to N6-(pyridoxal phosphate)lysine. Pyridoxal 5'-phosphate is bound at residue 237-238 (NT).

The protein belongs to the class-V pyridoxal-phosphate-dependent aminotransferase family. SerC subfamily. Homodimer. Pyridoxal 5'-phosphate serves as cofactor.

Its subcellular location is the cytoplasm. The enzyme catalyses O-phospho-L-serine + 2-oxoglutarate = 3-phosphooxypyruvate + L-glutamate. The catalysed reaction is 4-(phosphooxy)-L-threonine + 2-oxoglutarate = (R)-3-hydroxy-2-oxo-4-phosphooxybutanoate + L-glutamate. It participates in amino-acid biosynthesis; L-serine biosynthesis; L-serine from 3-phospho-D-glycerate: step 2/3. The protein operates within cofactor biosynthesis; pyridoxine 5'-phosphate biosynthesis; pyridoxine 5'-phosphate from D-erythrose 4-phosphate: step 3/5. Its function is as follows. Catalyzes the reversible conversion of 3-phosphohydroxypyruvate to phosphoserine and of 3-hydroxy-2-oxo-4-phosphonooxybutanoate to phosphohydroxythreonine. In Burkholderia cenocepacia (strain ATCC BAA-245 / DSM 16553 / LMG 16656 / NCTC 13227 / J2315 / CF5610) (Burkholderia cepacia (strain J2315)), this protein is Phosphoserine aminotransferase.